Consider the following 245-residue polypeptide: 1-(5-phosphoribosyl)-5-[(5-phosphoribosylamino)methylideneamino] imidazole-4-carboxamide isomerase (245 aa).

Catalysis depends on Asp-7, which acts as the Proton acceptor. Asp-129 functions as the Proton donor in the catalytic mechanism.

The protein belongs to the HisA/HisF family.

The protein localises to the cytoplasm. It carries out the reaction 1-(5-phospho-beta-D-ribosyl)-5-[(5-phospho-beta-D-ribosylamino)methylideneamino]imidazole-4-carboxamide = 5-[(5-phospho-1-deoxy-D-ribulos-1-ylimino)methylamino]-1-(5-phospho-beta-D-ribosyl)imidazole-4-carboxamide. It functions in the pathway amino-acid biosynthesis; L-histidine biosynthesis; L-histidine from 5-phospho-alpha-D-ribose 1-diphosphate: step 4/9. The protein is 1-(5-phosphoribosyl)-5-[(5-phosphoribosylamino)methylideneamino] imidazole-4-carboxamide isomerase of Tolumonas auensis (strain DSM 9187 / NBRC 110442 / TA 4).